The following is a 430-amino-acid chain: Ribosomal protein uS12 methylthiotransferase RimO (430 aa).

The 116-residue stretch at 4-119 folds into the MTTase N-terminal domain; it reads LKINFISLGC…IPVLFDIKPK (116 aa). 6 residues coordinate [4Fe-4S] cluster: Cys-13, Cys-49, Cys-82, Cys-141, Cys-145, and Cys-148. Residues 127-358 form the Radical SAM core domain; sequence STPKHTAYLK…SALQENITEQ (232 aa). Positions 361–430 constitute a TRAM domain; that stretch reads KSLIGKELDI…DKYDVVGEAE (70 aa).

It belongs to the methylthiotransferase family. RimO subfamily. [4Fe-4S] cluster is required as a cofactor.

The protein resides in the cytoplasm. It carries out the reaction L-aspartate(89)-[ribosomal protein uS12]-hydrogen + (sulfur carrier)-SH + AH2 + 2 S-adenosyl-L-methionine = 3-methylsulfanyl-L-aspartate(89)-[ribosomal protein uS12]-hydrogen + (sulfur carrier)-H + 5'-deoxyadenosine + L-methionine + A + S-adenosyl-L-homocysteine + 2 H(+). Its function is as follows. Catalyzes the methylthiolation of an aspartic acid residue of ribosomal protein uS12. This chain is Ribosomal protein uS12 methylthiotransferase RimO, found in Sulfurihydrogenibium sp. (strain YO3AOP1).